The primary structure comprises 241 residues: Uracil-DNA glycosylase (241 aa).

Residue aspartate 71 is the Proton acceptor of the active site.

It belongs to the uracil-DNA glycosylase (UDG) superfamily. UNG family.

It is found in the cytoplasm. The enzyme catalyses Hydrolyzes single-stranded DNA or mismatched double-stranded DNA and polynucleotides, releasing free uracil.. Excises uracil residues from the DNA which can arise as a result of misincorporation of dUMP residues by DNA polymerase or due to deamination of cytosine. This Xanthomonas campestris pv. campestris (strain 8004) protein is Uracil-DNA glycosylase.